A 350-amino-acid polypeptide reads, in one-letter code: Tetraacyldisaccharide 4'-kinase (350 aa).

Residue 48–55 participates in ATP binding; the sequence is SAGGTGKT.

The protein belongs to the LpxK family.

It carries out the reaction a lipid A disaccharide + ATP = a lipid IVA + ADP + H(+). It participates in glycolipid biosynthesis; lipid IV(A) biosynthesis; lipid IV(A) from (3R)-3-hydroxytetradecanoyl-[acyl-carrier-protein] and UDP-N-acetyl-alpha-D-glucosamine: step 6/6. Functionally, transfers the gamma-phosphate of ATP to the 4'-position of a tetraacyldisaccharide 1-phosphate intermediate (termed DS-1-P) to form tetraacyldisaccharide 1,4'-bis-phosphate (lipid IVA). The protein is Tetraacyldisaccharide 4'-kinase of Chlorobium limicola (strain DSM 245 / NBRC 103803 / 6330).